The primary structure comprises 208 residues: Urease accessory protein UreG 2 (208 aa).

A GTP-binding site is contributed by 16-23; the sequence is GPVGSGKT.

The protein belongs to the SIMIBI class G3E GTPase family. UreG subfamily. Homodimer. UreD, UreF and UreG form a complex that acts as a GTP-hydrolysis-dependent molecular chaperone, activating the urease apoprotein by helping to assemble the nickel containing metallocenter of UreC. The UreE protein probably delivers the nickel.

Its subcellular location is the cytoplasm. Its function is as follows. Facilitates the functional incorporation of the urease nickel metallocenter. This process requires GTP hydrolysis, probably effectuated by UreG. In Methylobacterium radiotolerans (strain ATCC 27329 / DSM 1819 / JCM 2831 / NBRC 15690 / NCIMB 10815 / 0-1), this protein is Urease accessory protein UreG 2.